A 486-amino-acid chain; its full sequence is MGNVFFLLLFSLTHFPLAQQSRCTLTIGISSYHSSPCSPTQPVCTWNLDLNSLTTDQRLHPPCPNLITYSGFHKTYSLYLFPHWIKKPNRQGLGYYSPSYNDPCSLQCPYLGCQAWTSAYTGPVSSPSWKFHSDVNFTQEVSQVSLRLHFSKCGSSMTLLVDAPGYDPLWFITSEPTQPPPTSPPLVHDSDLEHVLTPSTSWTTKILKFIQLTLQSTNYSCMVCVDRSSLSSWHVLYTPNISIPQQTSSRTILFPSLALPAPPSQPFPWTHCYQPRLQAITTDNCNNSIILPPFSLAPVPPPATRRRRAVPIAVWLVSALAAGTGIAGGVTGSLSLASSKSLLLEVDKDISHLTQAIVKNHQNILRVAQYAAQNRRGLDLLFWEQGGLCKAIQEQCCFLNISNTHVSVLQERPPLEKRVITGWGLNWDLGLSQWAREALQTGITILALLLLVILFGPCILRQIQALPQRLQNRHNQYSLINPETML.

Positions 1–18 (MGNVFFLLLFSLTHFPLA) are cleaved as a signal peptide. Residues 19–438 (QQSRCTLTIG…LGLSQWAREA (420 aa)) lie on the Extracellular side of the membrane. N-linked (GlcNAc...) asparagine; by host glycosylation is found at N136 and N218. Residues 221-224 (CMVC) carry the CXXC motif. 3 disulfides stabilise this stretch: C221–C224, C221–C397, and C389–C396. 2 N-linked (GlcNAc...) asparagine; by host glycosylation sites follow: N240 and N286. A fusion peptide region spans residues 309 to 329 (AVPIAVWLVSALAAGTGIAGG). Coiled-coil stretches lie at residues 337–383 (ASSK…LLFW) and 393–425 (QEQC…GWGL). The tract at residues 372–388 (AQNRRGLDLLFWEQGGL) is immunosuppression. The short motif at 389–397 (CKAIQEQCC) is the CX6CC element. N400 carries an N-linked (GlcNAc...) asparagine; by host glycan. A helical transmembrane segment spans residues 439–459 (LQTGITILALLLLVILFGPCI). C458 carries S-palmitoyl cysteine; by host lipidation. Over 460-486 (LRQIQALPQRLQNRHNQYSLINPETML) the chain is Cytoplasmic.

The mature envelope protein (Env) consists of a trimer of SU-TM heterodimers attached by a labile interchain disulfide bond. Post-translationally, specific enzymatic cleavages in vivo yield mature proteins. Envelope glycoproteins are synthesized as an inactive precursor that is N-glycosylated and processed likely by host cell furin or by a furin-like protease in the Golgi to yield the mature SU and TM proteins. The cleavage site between SU and TM requires the minimal sequence [KR]-X-[KR]-R. The CXXC motif is highly conserved across a broad range of retroviral envelope proteins. It is thought to participate in the formation of a labile disulfide bond possibly with the CX6CC motif present in the transmembrane protein. Isomerization of the intersubunit disulfide bond to an SU intrachain disulfide bond is thought to occur upon receptor recognition in order to allow membrane fusion. In terms of processing, the transmembrane protein is palmitoylated.

It localises to the virion membrane. The protein resides in the host cell membrane. Functionally, the surface protein (SU) attaches the virus to the host cell by binding to its receptor. This interaction triggers the refolding of the transmembrane protein (TM) and is thought to activate its fusogenic potential by unmasking its fusion peptide. Fusion occurs at the host cell plasma membrane. The transmembrane protein (TM) acts as a class I viral fusion protein. Under the current model, the protein has at least 3 conformational states: pre-fusion native state, pre-hairpin intermediate state, and post-fusion hairpin state. During viral and target cell membrane fusion, the coiled coil regions (heptad repeats) assume a trimer-of-hairpins structure, positioning the fusion peptide in close proximity to the C-terminal region of the ectodomain. The formation of this structure appears to drive apposition and subsequent fusion of viral and target cell membranes. Membranes fusion leads to delivery of the nucleocapsid into the cytoplasm. The chain is Envelope glycoprotein gp63 (env) from Homo sapiens (Human).